A 118-amino-acid chain; its full sequence is Large ribosomal subunit protein uL18 (118 aa).

It belongs to the universal ribosomal protein uL18 family. As to quaternary structure, part of the 50S ribosomal subunit; part of the 5S rRNA/L5/L18/L25 subcomplex. Contacts the 5S and 23S rRNAs.

Its function is as follows. This is one of the proteins that bind and probably mediate the attachment of the 5S RNA into the large ribosomal subunit, where it forms part of the central protuberance. The protein is Large ribosomal subunit protein uL18 of Rickettsia typhi (strain ATCC VR-144 / Wilmington).